The sequence spans 192 residues: Vascular endothelial growth factor A (192 aa).

Residues 1–26 (MNFLLTWIHWGLAALLYFHNAKVLQA) form the signal peptide. 3 disulfides stabilise this stretch: Cys-52–Cys-94, Cys-83–Cys-128, and Cys-87–Cys-130. Asn-101 is a glycosylation site (N-linked (GlcNAc...) asparagine).

The protein belongs to the PDGF/VEGF growth factor family. In terms of assembly, homodimer; disulfide-linked. Also found as heterodimer with PGF. Interacts with FLT1/VEGFR1 and KDR/VEGFR2 receptors, heparan sulfate and heparin. As to expression, expressed by the venom gland, and probably other tissues.

Its subcellular location is the secreted. Functionally, growth factor active in angiogenesis, vasculogenesis and endothelial cell growth. Induces endothelial cell proliferation, promotes cell migration, inhibits apoptosis and induces permeabilization of blood vessels. This chain is Vascular endothelial growth factor A, found in Agkistrodon piscivorus piscivorus (Eastern cottonmouth).